Here is an 810-residue protein sequence, read N- to C-terminus: S-adenosyl-L-methionine-dependent tRNA 4-demethylwyosine synthase (810 aa).

Disordered stretches follow at residues 86-116 (NGGGKGGGCCSSKGGKKGGCCSSKGGKKGGC) and 156-176 (RSSTPKVFSKNSSSNSRVGKK). Low complexity predominate over residues 104–116 (GCCSSKGGKKGGC). Over residues 159–172 (TPKVFSKNSSSNSR) the composition is skewed to polar residues. A Flavodoxin-like domain is found at 205 to 360 (IYVLYSSLQG…KIDEWTSLLA (156 aa)). FMN-binding positions include 211–215 (SLQGA) and 304–337 (VLGLGDSESWPEKFCYQAKRADHWISRLGGRRIF). The segment covering 374–397 (DENADSEEDEEEGNGSDELGDVED) has biased composition (acidic residues). The interval 374-407 (DENADSEEDEEEGNGSDELGDVEDIGGKGSNGKF) is disordered. The Radical SAM core domain maps to 463-713 (FNIASSRCME…ELQRRGLHYD (251 aa)). 3 residues coordinate [4Fe-4S] cluster: Cys-479, Cys-483, and Cys-486. Residue Lys-496 forms a Glycyl lysine isopeptide (Lys-Gly) (interchain with G-Cter in ubiquitin) linkage. The interval 782–810 (RVYRKDKKKQNKENQETTTRETPLPPIPA) is disordered.

This sequence belongs to the TYW1 family. The cofactor is [4Fe-4S] cluster.

Its subcellular location is the endoplasmic reticulum. It carries out the reaction N(1)-methylguanosine(37) in tRNA(Phe) + pyruvate + S-adenosyl-L-methionine = 4-demethylwyosine(37) in tRNA(Phe) + 5'-deoxyadenosine + L-methionine + CO2 + H2O. It functions in the pathway tRNA modification; wybutosine-tRNA(Phe) biosynthesis. Functionally, component of the wybutosine biosynthesis pathway. Wybutosine is a hyper modified guanosine with a tricyclic base found at the 3'-position adjacent to the anticodon of eukaryotic phenylalanine tRNA. Catalyzes the condensation of N-methylguanine with 2 carbon atoms from pyruvate to form the tricyclic 4-demethylwyosine, an intermediate in wybutosine biosynthesis. In Saccharomyces cerevisiae (strain ATCC 204508 / S288c) (Baker's yeast), this protein is S-adenosyl-L-methionine-dependent tRNA 4-demethylwyosine synthase (TYW1).